A 505-amino-acid polypeptide reads, in one-letter code: ATP synthase subunit alpha (505 aa).

G171–T178 serves as a coordination point for ATP.

This sequence belongs to the ATPase alpha/beta chains family. As to quaternary structure, F-type ATPases have 2 components, CF(1) - the catalytic core - and CF(0) - the membrane proton channel. CF(1) has five subunits: alpha(3), beta(3), gamma(1), delta(1), epsilon(1). CF(0) has three main subunits: a(1), b(2) and c(9-12). The alpha and beta chains form an alternating ring which encloses part of the gamma chain. CF(1) is attached to CF(0) by a central stalk formed by the gamma and epsilon chains, while a peripheral stalk is formed by the delta and b chains.

The protein localises to the cell inner membrane. It catalyses the reaction ATP + H2O + 4 H(+)(in) = ADP + phosphate + 5 H(+)(out). Its function is as follows. Produces ATP from ADP in the presence of a proton gradient across the membrane. The alpha chain is a regulatory subunit. This Campylobacter fetus subsp. fetus (strain 82-40) protein is ATP synthase subunit alpha.